A 257-amino-acid chain; its full sequence is Thiazole synthase (257 aa).

Lys98 (schiff-base intermediate with DXP) is an active-site residue. 1-deoxy-D-xylulose 5-phosphate-binding positions include Gly159, 185–186, and 207–208; these read AG and NT.

This sequence belongs to the ThiG family. In terms of assembly, homotetramer. Forms heterodimers with either ThiH or ThiS.

It localises to the cytoplasm. The enzyme catalyses [ThiS sulfur-carrier protein]-C-terminal-Gly-aminoethanethioate + 2-iminoacetate + 1-deoxy-D-xylulose 5-phosphate = [ThiS sulfur-carrier protein]-C-terminal Gly-Gly + 2-[(2R,5Z)-2-carboxy-4-methylthiazol-5(2H)-ylidene]ethyl phosphate + 2 H2O + H(+). The protein operates within cofactor biosynthesis; thiamine diphosphate biosynthesis. Catalyzes the rearrangement of 1-deoxy-D-xylulose 5-phosphate (DXP) to produce the thiazole phosphate moiety of thiamine. Sulfur is provided by the thiocarboxylate moiety of the carrier protein ThiS. In vitro, sulfur can be provided by H(2)S. The sequence is that of Thiazole synthase from Anaeromyxobacter dehalogenans (strain 2CP-1 / ATCC BAA-258).